The following is a 128-amino-acid chain: Small ribosomal subunit protein uS9 (128 aa).

This sequence belongs to the universal ribosomal protein uS9 family.

This Cytophaga hutchinsonii (strain ATCC 33406 / DSM 1761 / CIP 103989 / NBRC 15051 / NCIMB 9469 / D465) protein is Small ribosomal subunit protein uS9.